The chain runs to 487 residues: Sensor protein CopS (487 aa).

Residues 1 to 9 lie on the Periplasmic side of the membrane; it reads MKPGSLTLR. The helical transmembrane segment at 10–30 threads the bilayer; it reads LSLLFVVAVAAVLIIVGVAFN. Over 31 to 136 the chain is Cytoplasmic; it reads ELSRHHFRAL…TASVSLPTAS (106 aa). Residues 137–157 traverse the membrane as a helical segment; it reads PPLTAWLVLDVTTHMHFFAML. The Periplasmic segment spans residues 158-159; the sequence is ER. A helical membrane pass occupies residues 160 to 180; it reads WFWGVLLASTVLSAALGWLVA. The 54-residue stretch at 181-234 folds into the HAMP domain; sequence KNGLRPVARVTQTAASMSAGSLKERIPLEPVPDELRALITAFNSMLGRLDDSFM. The Cytoplasmic segment spans residues 181–487; it reads KNGLRPVARV…EHETGCHCAG (307 aa). The Histidine kinase domain occupies 242–455; the sequence is DIAHELRTPI…LHPHLHAIAC (214 aa). Position 245 is a phosphohistidine; by autocatalysis (H245).

Its subcellular location is the cell inner membrane. The catalysed reaction is ATP + protein L-histidine = ADP + protein N-phospho-L-histidine.. In terms of biological role, member of the two-component regulatory system CopS/CopR. Involved in the activation of copper resistance gene operon copABCD. Specifically recognizes or transduces a signal only in response to copper. This would lead to phosphorylation of CopR in the cytoplasm. CopS/CopR may also regulate chromosomally encoded genes. May also be involved in basic copper metabolism. This is Sensor protein CopS (copS) from Pseudomonas syringae pv. tomato.